A 589-amino-acid polypeptide reads, in one-letter code: Proline--tRNA ligase (589 aa).

Belongs to the class-II aminoacyl-tRNA synthetase family. ProS type 1 subfamily. In terms of assembly, homodimer.

It localises to the cytoplasm. The enzyme catalyses tRNA(Pro) + L-proline + ATP = L-prolyl-tRNA(Pro) + AMP + diphosphate. Catalyzes the attachment of proline to tRNA(Pro) in a two-step reaction: proline is first activated by ATP to form Pro-AMP and then transferred to the acceptor end of tRNA(Pro). As ProRS can inadvertently accommodate and process non-cognate amino acids such as alanine and cysteine, to avoid such errors it has two additional distinct editing activities against alanine. One activity is designated as 'pretransfer' editing and involves the tRNA(Pro)-independent hydrolysis of activated Ala-AMP. The other activity is designated 'posttransfer' editing and involves deacylation of mischarged Ala-tRNA(Pro). The misacylated Cys-tRNA(Pro) is not edited by ProRS. The sequence is that of Proline--tRNA ligase from Gloeobacter violaceus (strain ATCC 29082 / PCC 7421).